We begin with the raw amino-acid sequence, 708 residues long: Metal-pseudopaline receptor CntO (708 aa).

The signal sequence occupies residues 1–21 (MRVSVSLVLGVGLGCSSPALW). The 107-residue stretch at 63-169 (RIEDIPQAIS…PGGTVNLVTK (107 aa)) folds into the TBDR plug domain. The 535-residue stretch at 174–708 (ERFARLHASA…NLTMSLTLNY (535 aa)) folds into the TBDR beta-barrel domain.

This sequence belongs to the TonB-dependent receptor family.

Its subcellular location is the cell outer membrane. In terms of biological role, transports the metallophore pseudopaline, which is involved in the acquisition of nickel and zinc, and thus enables bacterial growth inside the host, where metal access is limited. Is probably involved in the import of pseudopaline-metal complexes. This Pseudomonas aeruginosa (strain UCBPP-PA14) protein is Metal-pseudopaline receptor CntO.